The sequence spans 750 residues: Photosystem I P700 chlorophyll a apoprotein A1 (750 aa).

8 helical membrane-spanning segments follow: residues 70–93, 156–179, 195–219, 291–309, 346–369, 385–411, 433–455, and 531–549; these read IFSAHFGQLSIIFLWLSGMYFHGA, LYCTAIGALVFAALMLFAGWFHYH, LNHHLAGLLGLGSLSWAGHQVHVSL, IAHHHLAIAILFLIAGHMY, WHAQLALNLAMLGSLTIVVAHHMY, LSLFTHHMWIGGFLIVGAAAHAAIFMV, AIISHLNWACIFLGFHSFGLYIH, and FLVHHIHAFTIHVTVLILL. Cys-573 and Cys-582 together coordinate [4Fe-4S] cluster. 2 helical membrane passes run 589–610 and 664–686; these read HVFLGLFWMYNAISVVIFHFSW and LSAYGLFFLGAHFVWAFSLMFLF. His-675 is a chlorophyll a' binding site. 2 residues coordinate chlorophyll a: Met-683 and Tyr-691. Trp-692 lines the phylloquinone pocket. A helical transmembrane segment spans residues 724 to 744; the sequence is AVGVTHYLLGGIATTWAFFLA.

Belongs to the PsaA/PsaB family. As to quaternary structure, the PsaA/B heterodimer binds the P700 chlorophyll special pair and subsequent electron acceptors. PSI consists of a core antenna complex that captures photons, and an electron transfer chain that converts photonic excitation into a charge separation. The eukaryotic PSI reaction center is composed of at least 11 subunits. It depends on P700 is a chlorophyll a/chlorophyll a' dimer, A0 is one or more chlorophyll a, A1 is one or both phylloquinones and FX is a shared 4Fe-4S iron-sulfur center. as a cofactor.

It localises to the plastid. It is found in the chloroplast thylakoid membrane. The catalysed reaction is reduced [plastocyanin] + hnu + oxidized [2Fe-2S]-[ferredoxin] = oxidized [plastocyanin] + reduced [2Fe-2S]-[ferredoxin]. Functionally, psaA and PsaB bind P700, the primary electron donor of photosystem I (PSI), as well as the electron acceptors A0, A1 and FX. PSI is a plastocyanin-ferredoxin oxidoreductase, converting photonic excitation into a charge separation, which transfers an electron from the donor P700 chlorophyll pair to the spectroscopically characterized acceptors A0, A1, FX, FA and FB in turn. Oxidized P700 is reduced on the lumenal side of the thylakoid membrane by plastocyanin. This Nandina domestica (Heavenly bamboo) protein is Photosystem I P700 chlorophyll a apoprotein A1.